Here is a 169-residue protein sequence, read N- to C-terminus: Peptide deformylase (169 aa).

Residues C91 and H133 each coordinate Fe cation. Residue E134 is part of the active site. Position 137 (H137) interacts with Fe cation.

This sequence belongs to the polypeptide deformylase family. It depends on Fe(2+) as a cofactor.

The enzyme catalyses N-terminal N-formyl-L-methionyl-[peptide] + H2O = N-terminal L-methionyl-[peptide] + formate. Removes the formyl group from the N-terminal Met of newly synthesized proteins. Requires at least a dipeptide for an efficient rate of reaction. N-terminal L-methionine is a prerequisite for activity but the enzyme has broad specificity at other positions. The sequence is that of Peptide deformylase from Citrobacter koseri (strain ATCC BAA-895 / CDC 4225-83 / SGSC4696).